The chain runs to 985 residues: Serine/threonine-protein kinase N2 (985 aa).

The region spanning 33–109 (KLDFSDTIVQ…LQELNAHIVV (77 aa)) is the REM-1 1 domain. Lys77 is modified (N6-acetyllysine). Residue Ser110 is modified to Phosphoserine. Residues 111-136 (DPEDYTDCPRTPDTPNSDSRSSTSNN) form a disordered region. Thr121 and Thr124 each carry phosphothreonine. The segment covering 121–136 (TPDTPNSDSRSSTSNN) has biased composition (low complexity). 2 REM-1 domains span residues 121 to 204 (TPDT…TNEL) and 207 to 286 (DNAK…ELPK). Phosphoserine is present on residues Ser303, Ser307, Ser361, and Ser363. Residues 352–383 (ATSVALPGWSPSENRSSFMSRTSKSKSGSSRN) form a disordered region. Residues 354 to 474 (SVALPGWSPS…LYLEPQGTLF (121 aa)) enclose the C2 domain. Residues 366-382 (RSSFMSRTSKSKSGSSR) show a composition bias toward low complexity. Residues 383 to 464 (NLLKTDDLSN…FLDNQRHGMA (82 aa)) form a necessary to rescue apical junction formation region. A phosphoserine mark is found at Ser536, Ser584, Ser621, and Ser632. A disordered region spans residues 570-590 (DLEPEAPPAPPRASSLGEIDD). Residues 658–917 (FRCCAVLGRG…AEDVKKHPFF (260 aa)) enclose the Protein kinase domain. ATP contacts are provided by residues 664-672 (LGRGHFGKV) and Lys687. Asp783 functions as the Proton acceptor in the catalytic mechanism. Thr817 carries the phosphothreonine; by PDPK1 modification. Residues 918–978 (RLTDWSALLD…EEEQEMFRDF (61 aa)) are necessary for the catalytic activity. One can recognise an AGC-kinase C-terminal domain in the interval 918-985 (RLTDWSALLD…RDFDYVADWC (68 aa)). The residue at position 953 (Ser953) is a Phosphoserine. Thr959 is subject to Phosphothreonine. The segment at 979–985 (DYVADWC) is negatively regulates the responsiveness of the catalytic activity by cardiolipin and is required for optimal activation by the GTP-bound RhoA.

This sequence belongs to the protein kinase superfamily. AGC Ser/Thr protein kinase family. PKC subfamily. As to quaternary structure, interacts (via the REM repeats) with RHOA (GTP-bound form preferentially) and interacts (via the REM repeats) with RAC1 (GTP-bound form preferentially); the interactions induce its autophosphorylation. Interacts with RHOC. Interacts with NCK1 (via SH3 domains) and NCK2. Interacts with CD44. Interacts (via C-terminal kinase domain) with PDPK1; the interaction stimulates PDPK1 kinase activity. Interacts with MAP3K2; the interaction activates PRK2 kinase activity in a MAP3K2-independent kinase activity. Interacts (via C-terminal domain) with AKT1; the interaction occurs with the C-terminal cleavage product of PRK2 in apoptotic cells. Interacts (via C-terminus) with PTPN13 (via PDZ 3 domain). Interacts with CDK10. In terms of processing, phosphorylated during mitosis. Autophosphorylated. Phosphorylated. Binding to Rho and Rac promotes autophosphorylation and phosphorylation on serine and threonine residues. Phosphorylated by CDK10. Proteolytically cleaved by caspase-3 during the induction of apoptotic cell death. Activated by limited proteolysis with trypsin. As to expression, expressed in liver (at protein level).

The protein resides in the cytoplasm. It localises to the nucleus. The protein localises to the membrane. Its subcellular location is the cell projection. It is found in the lamellipodium. The protein resides in the cytoskeleton. It localises to the cleavage furrow. The protein localises to the midbody. Its subcellular location is the cell junction. It catalyses the reaction L-seryl-[protein] + ATP = O-phospho-L-seryl-[protein] + ADP + H(+). The catalysed reaction is L-threonyl-[protein] + ATP = O-phospho-L-threonyl-[protein] + ADP + H(+). With respect to regulation, kinase activity is activated upon binding to GTP-bound Rho1/Rac1 GTPases. Activated by caspase-3 (CASP3) cleavage during apoptosis. Activated by lipids, particularly cardiolipin and to a lesser extent by other acidic phospholipids and unsaturated fatty acids. Two specific sites, Thr-817 (activation loop of the kinase domain) and Thr-959 (turn motif), need to be phosphorylated for its full activation. Functionally, PKC-related serine/threonine-protein kinase and Rho/Rac effector protein that participates in specific signal transduction responses in the cell. Plays a role in the regulation of cell cycle progression, actin cytoskeleton assembly, cell migration, cell adhesion, tumor cell invasion and transcription activation signaling processes. Phosphorylates CTTN in hyaluronan-induced astrocytes and hence decreases CTTN ability to associate with filamentous actin. Phosphorylates HDAC5, therefore lead to impair HDAC5 import. Direct RhoA target required for the regulation of the maturation of primordial junctions into apical junction formation in bronchial epithelial cells. Required for G2/M phases of the cell cycle progression and abscission during cytokinesis in a ECT2-dependent manner. Stimulates FYN kinase activity that is required for establishment of skin cell-cell adhesion during keratinocytes differentiation. Regulates epithelial bladder cells speed and direction of movement during cell migration and tumor cell invasion. Inhibits Akt pro-survival-induced kinase activity. Mediates Rho protein-induced transcriptional activation via the c-fos serum response factor (SRF). Involved in the negative regulation of ciliogenesis. The sequence is that of Serine/threonine-protein kinase N2 (Pkn2) from Rattus norvegicus (Rat).